We begin with the raw amino-acid sequence, 383 residues long: U-box domain-containing protein 63 (383 aa).

The disordered stretch occupies residues 166-186; sequence PDGNVSNSHRNTQQKRDFASV. Residues 201–273 enclose the U-box domain; sequence SLKAILSDPV…HAFRQEEDSD (73 aa).

It catalyses the reaction S-ubiquitinyl-[E2 ubiquitin-conjugating enzyme]-L-cysteine + [acceptor protein]-L-lysine = [E2 ubiquitin-conjugating enzyme]-L-cysteine + N(6)-ubiquitinyl-[acceptor protein]-L-lysine.. It participates in protein modification; protein ubiquitination. In terms of biological role, functions as an E3 ubiquitin ligase. The protein is U-box domain-containing protein 63 (PUB63) of Arabidopsis thaliana (Mouse-ear cress).